The primary structure comprises 157 residues: Large ribosomal subunit protein eL24 (157 aa).

Positions 94–157 are disordered; the sequence is RNQKPEVRKA…ISAPRVGGKR (64 aa). A compositionally biased stretch (basic and acidic residues) spans 96–117; it reads QKPEVRKAQREQAIRAAKEAKK. Low complexity predominate over residues 123–140; sequence KKPAAPSAKASTKTAQKP.

Belongs to the eukaryotic ribosomal protein eL24 family. Component of the large ribosomal subunit.

It is found in the cytoplasm. Its function is as follows. Component of the large ribosomal subunit. The ribosome is a large ribonucleoprotein complex responsible for the synthesis of proteins in the cell. The protein is Large ribosomal subunit protein eL24 (rpl24) of Pagrus major (Red sea bream).